The sequence spans 305 residues: MGRKKEVTNAQRQRPEILAQTIKTGIIKSNLVPMFAGLTLALYKYKISPFEKIPEILFAFIGSILIIGAAGAFNNLYDRDIDSIMERTKNRPTVTGDISPKTALWLGIFMTIFGLVFLALTTYLAAILGFIGLFLYVVPYTMWSKRRTIYNTEIGSVSGAMPPLIGWAAIYPDVTHPAIIGLFIIMIIWQMPHFYAIAIRKHKEYEAANVPMLPVVKGVKRTYIQTNVYLVILIIISILLGSLSIGLMLVSLLLSILWLALSIYGYKKMDSEKWAKSLFIFSLFHMTILFSTVIIYSLVGIFFGS.

A run of 8 helical transmembrane segments spans residues 22–42 (IKTGIIKSNLVPMFAGLTLAL), 53–73 (IPEILFAFIGSILIIGAAGAF), 94–114 (VTGDISPKTALWLGIFMTIFG), 115–135 (LVFLALTTYLAAILGFIGLFL), 154–174 (IGSVSGAMPPLIGWAAIYPDV), 179–199 (IIGLFIIMIIWQMPHFYAIAI), 230–250 (LVILIIISILLGSLSIGLMLV), and 283–303 (LFHMTILFSTVIIYSLVGIFF).

The protein belongs to the UbiA prenyltransferase family. Protoheme IX farnesyltransferase subfamily. In terms of assembly, interacts with CtaA.

Its subcellular location is the cell membrane. It carries out the reaction heme b + (2E,6E)-farnesyl diphosphate + H2O = Fe(II)-heme o + diphosphate. The protein operates within porphyrin-containing compound metabolism; heme O biosynthesis; heme O from protoheme: step 1/1. Its function is as follows. Converts heme B (protoheme IX) to heme O by substitution of the vinyl group on carbon 2 of heme B porphyrin ring with a hydroxyethyl farnesyl side group. The sequence is that of Protoheme IX farnesyltransferase 1 from Bacillus cytotoxicus (strain DSM 22905 / CIP 110041 / 391-98 / NVH 391-98).